Reading from the N-terminus, the 1351-residue chain is Alpha-latrotoxin-Lh1a (1351 aa).

Residues 1–7 (SLVRMRR) form the signal peptide. Residues 4–7 (RMRR) are furin-like endopeptidase recognition region. Residues 226 to 245 (VLYALLYGTQTYVSVMFFLL) form a helix H8 is the probable transmembrane region of the tetrameric pore inserted in the target cell membrane region. Cysteine 401 and cysteine 1054 form a disulfide bridge. ANK repeat units lie at residues 446–477 (LYNT…ATFE), 478–509 (QGRT…ELNQ), 513–542 (KGYT…SINS), 547–577 (FLQT…NINE), 581–610 (DGFT…DLNA), 614–644 (KGLT…DVNA), 648–678 (NNMT…NADV), 683–711 (GLLS…NVNV), 717–746 (GGIT…NIEQ), 750–779 (EKYT…NFEA), 783–812 (SGAT…NWRD), 816–846 (NGQM…VLDI), 850–879 (NSDT…DINT), 883–912 (TGHA…NVYI), 916–945 (DGIN…KFEW), 959–991 (EECA…GNFA), 992–1019 (ICGP…DLNV), 1023–1052 (KPDT…KVNH), 1056–1085 (NGMT…DFRR), 1089–1119 (LGAT…DIDI), 1125–1154 (DKET…DMTI), and 1158–1187 (YDKT…KFRR). The furin-like endopeptidase recognition region stretch occupies residues 1184 to 1187 (KFRR). Positions 1188–1351 (EYKSSYGEHS…LGSVIMNSHS (164 aa)) are excised as a propeptide.

The protein belongs to the cationic peptide 01 (latrotoxin) family. 03 (alpha-latrotoxin) subfamily. As to quaternary structure, homotetramer in membranes. Processed by furin-like proteases at both the N- and C-termini. Expressed in venom gland, cephalothorax, and abdomen tissues from both males and females.

It is found in the secreted. The protein localises to the target cell membrane. In terms of biological role, presynaptic neurotoxin that causes massive release of neurotransmitters from vertebrate (but not invertebrate) nerve terminals and endocrine cells via a complex mechanism involving activation of receptor(s) and toxin insertion into the plasma membrane with subsequent pore formation. Binds to neurexin-1-alpha (NRXN1) in a calcium dependent manner, adhesion G protein-coupled receptor L1 (ADGRL1, also termed latrophilin-1 and calcium-independent receptor of latrotoxin (CIRL)), and receptor-type tyrosine-protein phosphatase S (PTPRS), also termed PTP sigma. NRXN1 and PTPRS are suggested to provide a platform for binding and subsequent pore formation events. In contrast, binding to ADGRL1 does not involve oligomerization and channel formation, but direct downstream stimulation of the synaptic fusion machinery. Induces rapid muscle contracture and loss of twitch tension when added to the isolated and indirectly stimulated chick biventer cervicis nerve-muscle preparation. The protein is Alpha-latrotoxin-Lh1a of Latrodectus hasselti (Redback spider).